A 389-amino-acid chain; its full sequence is Probable nitrate transporter NarT (389 aa).

The next 12 membrane-spanning stretches (helical) occupy residues 14–34 (TLSLVVGFMAWSIIAPLMPFI), 45–65 (ISIILAIPVILGSVLRVPFGY), 69–89 (IVGAKWVFFTSFIVLLFPIFF), 97–117 (GMLMASGFFLGVGGAIFSVGV), 139–159 (GNIGTAVSSFLAPPIAGIIGW), 161–181 (TTVRSYLIIIALFALIMFIFG), 211–231 (WYFITFGAFVAFGIFLPNYLV), 246–266 (GVFIALATFLRPIGGILGDKF), 268–288 (AVKVLMIDFVVMIIGAIILGI), 294–314 (LFTVGCLTISICAGIGNGLIF), 331–351 (IVSMMGGLGGFFPPLVITYVA), and 353–373 (LTGSSHLAFIFLAVFGCIALF).

This sequence belongs to the major facilitator superfamily. Nitrate/nitrite porter (TC 2.A.1.8) family.

The protein resides in the cell membrane. Probably required for nitrate uptake under anoxic conditions. Also possibly involved in excretion of nitrite produced by the dissimilatory reduction of nitrate. This is Probable nitrate transporter NarT (narT) from Staphylococcus aureus (strain USA300).